Reading from the N-terminus, the 424-residue chain is Serine--tRNA ligase (424 aa).

230–232 (TAE) serves as a coordination point for L-serine. ATP is bound at residue 261–263 (RAE). An L-serine-binding site is contributed by Glu-284. Residue 348–351 (EISS) participates in ATP binding. Ser-384 provides a ligand contact to L-serine.

The protein belongs to the class-II aminoacyl-tRNA synthetase family. Type-1 seryl-tRNA synthetase subfamily. In terms of assembly, homodimer. The tRNA molecule binds across the dimer.

It is found in the cytoplasm. The enzyme catalyses tRNA(Ser) + L-serine + ATP = L-seryl-tRNA(Ser) + AMP + diphosphate + H(+). It carries out the reaction tRNA(Sec) + L-serine + ATP = L-seryl-tRNA(Sec) + AMP + diphosphate + H(+). The protein operates within aminoacyl-tRNA biosynthesis; selenocysteinyl-tRNA(Sec) biosynthesis; L-seryl-tRNA(Sec) from L-serine and tRNA(Sec): step 1/1. Its function is as follows. Catalyzes the attachment of serine to tRNA(Ser). Is also able to aminoacylate tRNA(Sec) with serine, to form the misacylated tRNA L-seryl-tRNA(Sec), which will be further converted into selenocysteinyl-tRNA(Sec). The chain is Serine--tRNA ligase from Desulforamulus reducens (strain ATCC BAA-1160 / DSM 100696 / MI-1) (Desulfotomaculum reducens).